Reading from the N-terminus, the 898-residue chain is Protein kintoun (898 aa).

Disordered regions lie at residues 558–680 (GELK…VESD) and 765–822 (ILGQ…SGIS). Positions 575-602 (INTRTVEDDTKVAKENVKKVDQETAHEG) are enriched in basic and acidic residues. Residues 603-616 (KKSKKNQRRKNKKR) are compositionally biased toward basic residues. A compositionally biased stretch (polar residues) spans 641-656 (NEANSFEGTGSSSEAT).

It belongs to the PIH1 family. Kintoun subfamily.

The protein resides in the cytoplasm. Functionally, required for cytoplasmic pre-assembly of axonemal dyneins, thereby playing a central role in motility in cilia and flagella. Involved in pre-assembly of dynein arm complexes in the cytoplasm before intraflagellar transport loads them for the ciliary compartment. In Aedes aegypti (Yellowfever mosquito), this protein is Protein kintoun.